Here is a 535-residue protein sequence, read N- to C-terminus: MAKKVAVIGAGVSGLISLKCCVDEGLEPTCFERTEDIGGLWRFKENVEDGRASIYQSVITNTSKEMSCFSDFPMPEDFPNFLHNSKLLEYFRIFAKKFDLLKYIQFQTTVISVKKRPDFASSGQWEVVTQSNSKQQSAVFDAVMVCSGHHILPNIPLKSFPGIEKFKGQYFHSRQYKHPAGLEGKRILVIGIGNSASDIAVELSKKAAQVYISTRKGSWVMSRISEDGYPWDMVFHTRFSSMLRNVLPRMIVKWMMEQQMNRWFNHENYGLAPENKYLMKEPVLNDDLPSRILYGTIKVKRRVKELTESAAIFEDGTVEEDIDVIVFATGYTFAFPFLEESLVKIEDNMVSLYKYMFPPQLEKSTFACLGLIQPLGSIFPTVELQARWATRVFKGLCSLPSKETMMADIIKRNENRIALFGESLSQKLQTNYIDYLDELALEIGAKPDLVSFLFKDPKLAVKLYFGPCNSYQYRLVGPGQWEGARNAIFTQKQRILKPLKTRTLKASSNFPVSFLLKFLGLFALVLAFLFQLQWF.

At Ala-2 the chain carries N-acetylalanine. FAD-binding positions include 9 to 13 (GAGVS), Glu-32, 40 to 41 (LW), and 61 to 62 (NT). Residues 60-61 (TN) and 195-198 (SASD) each bind NADP(+). A Glycyl lysine isopeptide (Lys-Gly) (interchain with G-Cter in SUMO) cross-link involves residue Lys-492. A helical membrane pass occupies residues 510–530 (FPVSFLLKFLGLFALVLAFLF).

It belongs to the FMO family. Requires FAD as cofactor. Mg(2+) serves as cofactor. As to expression, lung.

It is found in the microsome membrane. The protein localises to the endoplasmic reticulum membrane. It carries out the reaction N,N-dimethylaniline + NADPH + O2 + H(+) = N,N-dimethylaniline N-oxide + NADP(+) + H2O. Functionally, catalyzes the oxidative metabolism of numerous xenobiotics, including mainly therapeutic drugs and insecticides that contain a soft nucleophile, most commonly nitrogen and sulfur and participates to their bioactivation. Most drug substrates are tertiary amines such as prochlorperazine and trifluoperazine which are N-oxygenated to form the N-oxide, or sulfides such as thiourea and ethionamide, which are S-oxygenated to the sulfoxide. Others include primary alkylamines such as N-dodecylamine and octan-1-amine that are sequentially monooxygenated to oximes through intermediate hydroxylamines and both steps are NADPH- and oxygen-dependent. Also metabolized N-Deacetyl ketoconazole (DAK) to N-hydroxy-DAK and appears to further metabolizes N-hydroxy-DAK to two others metabolites. Also catalyzes S-oxygenation of the thioether-containing organophosphate insecticides, phorate and disulfoton. The polypeptide is Dimethylaniline monooxygenase [N-oxide-forming] 2 (Oryctolagus cuniculus (Rabbit)).